The primary structure comprises 275 residues: Adaptin ear-binding coat-associated protein 1 (275 aa).

The interval 170-191 (KGGASKPRTARGGGLSLLPPPP) is disordered. Position 180 is an omega-N-methylarginine (arginine 180). Phosphothreonine is present on threonine 211. Short sequence motifs (WXXF motif) lie at residues 252–255 (WGDF) and 272–275 (WVQF). A disordered region spans residues 254 to 275 (DFSTASSSVPNQAPQPSNWVQF). The span at 256–275 (STASSSVPNQAPQPSNWVQF) shows a compositional bias: polar residues.

Belongs to the NECAP family. In terms of assembly, interacts with AP1G1 and AP2A1 components of the adapter protein complexes AP-1 and AP-2. Interacts with the GAE domain proteins GGA1, GGA2 and GGA3.

The protein localises to the cytoplasmic vesicle. It localises to the clathrin-coated vesicle membrane. Its subcellular location is the cell membrane. Involved in endocytosis. The protein is Adaptin ear-binding coat-associated protein 1 (NECAP1) of Homo sapiens (Human).